Reading from the N-terminus, the 338-residue chain is GTPase Obg (338 aa).

Residues 1–159 (MKFIDEVTLF…AKLRLELKLM (159 aa)) enclose the Obg domain. The OBG-type G domain occupies 160-331 (ADVGLLGLPN…LLDEIARRLW (172 aa)). Residues 166–173 (GLPNAGKS), 191–195 (FTTIK), 213–216 (DIPG), 283–286 (TKLD), and 312–314 (SSA) each bind GTP. Mg(2+) contacts are provided by Ser173 and Thr193.

It belongs to the TRAFAC class OBG-HflX-like GTPase superfamily. OBG GTPase family. As to quaternary structure, monomer. Mg(2+) serves as cofactor.

The protein localises to the cytoplasm. In terms of biological role, an essential GTPase which binds GTP, GDP and possibly (p)ppGpp with moderate affinity, with high nucleotide exchange rates and a fairly low GTP hydrolysis rate. Plays a role in control of the cell cycle, stress response, ribosome biogenesis and in those bacteria that undergo differentiation, in morphogenesis control. This is GTPase Obg from Pelobacter propionicus (strain DSM 2379 / NBRC 103807 / OttBd1).